A 165-amino-acid polypeptide reads, in one-letter code: Mediator of RNA polymerase II transcription subunit 10 (165 aa).

Disordered regions lie at residues 54-81 (SLHT…DPAL) and 143-165 (LRGE…RERG). The segment covering 62-77 (TASTTAPNQYQSTNPN) has biased composition (polar residues).

Belongs to the Mediator complex subunit 10 family. Component of the Mediator complex.

The protein localises to the nucleus. In terms of biological role, component of the Mediator complex, a coactivator involved in the regulated transcription of nearly all RNA polymerase II-dependent genes. Mediator functions as a bridge to convey information from gene-specific regulatory proteins to the basal RNA polymerase II transcription machinery. Mediator is recruited to promoters by direct interactions with regulatory proteins and serves as a scaffold for the assembly of a functional preinitiation complex with RNA polymerase II and the general transcription factors. The chain is Mediator of RNA polymerase II transcription subunit 10 (nut2) from Emericella nidulans (strain FGSC A4 / ATCC 38163 / CBS 112.46 / NRRL 194 / M139) (Aspergillus nidulans).